The following is a 70-amino-acid chain: ATP synthase subunit epsilon, mitochondrial (70 aa).

This sequence belongs to the eukaryotic ATPase epsilon family. F-type ATPases have 2 components, CF(1) - the catalytic core - and CF(0) - the membrane proton channel. CF(1) has five subunits: alpha(3), beta(3), gamma(1), delta(1), epsilon(1). CF(0) has three main subunits: a, b and c.

It is found in the mitochondrion. Its subcellular location is the mitochondrion inner membrane. Mitochondrial membrane ATP synthase (F(1)F(0) ATP synthase or Complex V) produces ATP from ADP in the presence of a proton gradient across the membrane which is generated by electron transport complexes of the respiratory chain. F-type ATPases consist of two structural domains, F(1) - containing the extramembraneous catalytic core, and F(0) - containing the membrane proton channel, linked together by a central stalk and a peripheral stalk. During catalysis, ATP synthesis in the catalytic domain of F(1) is coupled via a rotary mechanism of the central stalk subunits to proton translocation. Part of the complex F(1) domain and of the central stalk which is part of the complex rotary element. Rotation of the central stalk against the surrounding alpha(3)beta(3) subunits leads to hydrolysis of ATP in three separate catalytic sites on the beta subunits. The protein is ATP synthase subunit epsilon, mitochondrial of Zea mays (Maize).